Consider the following 315-residue polypeptide: Cytochrome c biogenesis protein CcsA (315 aa).

The next 8 helical transmembrane spans lie at 15 to 35 (SCFL…GFGG), 39 to 59 (FSFT…LQLI), 73 to 93 (LYES…YIEV), 97 to 117 (TLFL…FTDF), 144 to 164 (VMIA…AYLV), 222 to 242 (TIGI…IWAN), 257 to 277 (WAFI…VGGW), and 283 to 303 (ALVA…VNLL).

The protein belongs to the CcmF/CycK/Ccl1/NrfE/CcsA family. In terms of assembly, may interact with Ccs1.

It is found in the plastid. Its subcellular location is the chloroplast thylakoid membrane. Its function is as follows. Required during biogenesis of c-type cytochromes (cytochrome c6 and cytochrome f) at the step of heme attachment. The protein is Cytochrome c biogenesis protein CcsA of Chlorella vulgaris (Green alga).